We begin with the raw amino-acid sequence, 497 residues long: Cysteine-rich secretory protein LCCL domain-containing 2 (497 aa).

The N-terminal stretch at 1-22 is a signal peptide; the sequence is MSCVLGGVIPLGLLFLVCGSQG. Residue asparagine 27 is glycosylated (N-linked (GlcNAc...) asparagine). The 139-residue stretch at 62–200 folds into the SCP domain; the sequence is LHNKLRGQVQ…ENAVYFVCNY (139 aa). LCCL domains lie at 284–379 and 385–488; these read MTQV…SSSF and KVQD…RDGK. 4 disulfides stabilise this stretch: cysteine 290-cysteine 308, cysteine 312-cysteine 332, cysteine 391-cysteine 413, and cysteine 417-cysteine 440.

Belongs to the CRISP family. Binds to heparin, dermatan sulfate and chondroitin sulfate.

The protein localises to the secreted. Promotes matrix assembly. In Homo sapiens (Human), this protein is Cysteine-rich secretory protein LCCL domain-containing 2 (CRISPLD2).